Consider the following 206-residue polypeptide: Small ribosomal subunit protein uS4 (206 aa).

The S4 RNA-binding domain occupies 96–156 (SRLDNVVYRM…EKSKKQLRIQ (61 aa)).

It belongs to the universal ribosomal protein uS4 family. Part of the 30S ribosomal subunit. Contacts protein S5. The interaction surface between S4 and S5 is involved in control of translational fidelity.

Functionally, one of the primary rRNA binding proteins, it binds directly to 16S rRNA where it nucleates assembly of the body of the 30S subunit. Its function is as follows. With S5 and S12 plays an important role in translational accuracy. The polypeptide is Small ribosomal subunit protein uS4 (Francisella philomiragia subsp. philomiragia (strain ATCC 25017 / CCUG 19701 / FSC 153 / O#319-036)).